Here is a 406-residue protein sequence, read N- to C-terminus: Probable tRNA sulfurtransferase (406 aa).

In terms of domain architecture, THUMP spans alanine 62–aspartate 167. Residues methionine 185–leucine 186, histidine 210–phenylalanine 211, arginine 267, glycine 289, and glutamine 298 contribute to the ATP site.

It belongs to the ThiI family.

It localises to the cytoplasm. It catalyses the reaction [ThiI sulfur-carrier protein]-S-sulfanyl-L-cysteine + a uridine in tRNA + 2 reduced [2Fe-2S]-[ferredoxin] + ATP + H(+) = [ThiI sulfur-carrier protein]-L-cysteine + a 4-thiouridine in tRNA + 2 oxidized [2Fe-2S]-[ferredoxin] + AMP + diphosphate. It carries out the reaction [ThiS sulfur-carrier protein]-C-terminal Gly-Gly-AMP + S-sulfanyl-L-cysteinyl-[cysteine desulfurase] + AH2 = [ThiS sulfur-carrier protein]-C-terminal-Gly-aminoethanethioate + L-cysteinyl-[cysteine desulfurase] + A + AMP + 2 H(+). It participates in cofactor biosynthesis; thiamine diphosphate biosynthesis. Catalyzes the ATP-dependent transfer of a sulfur to tRNA to produce 4-thiouridine in position 8 of tRNAs, which functions as a near-UV photosensor. Also catalyzes the transfer of sulfur to the sulfur carrier protein ThiS, forming ThiS-thiocarboxylate. This is a step in the synthesis of thiazole, in the thiamine biosynthesis pathway. The sulfur is donated as persulfide by IscS. This is Probable tRNA sulfurtransferase from Lactococcus lactis subsp. cremoris (strain MG1363).